Reading from the N-terminus, the 30-residue chain is Dendrotoxin A (30 aa).

A disulfide bond links Cys3 and Cys22.

This sequence belongs to the three-finger toxin family. Short-chain subfamily. Acn-esterase inhibitor sub-subfamily. Contains 4 disulfide bonds. As to expression, expressed by the venom gland.

Its subcellular location is the secreted. Its function is as follows. Inhibits acetylcholinesterase. Has been described to inhibit both the slowly and the rapidly inactivating phases of potassium efflux. The sequence is that of Dendrotoxin A from Dendroaspis angusticeps (Eastern green mamba).